The chain runs to 698 residues: Serotransferrin (698 aa).

The signal sequence occupies residues 1-19 (MRLAVGALLVCAVLGLCLA). 2 consecutive Transferrin-like domains span residues 25–347 (VRWC…NLRE) and 361–683 (VKWC…NLRK). 2 disulfides stabilise this stretch: cysteine 28-cysteine 67 and cysteine 38-cysteine 58. Arginine 42 carries the post-translational modification Dimethylated arginine. Serine 51 is a glycosylation site (O-linked (GalNAc...) serine). Fe(3+)-binding residues include aspartate 82 and tyrosine 114. Disulfide bonds link cysteine 137-cysteine 213, cysteine 156-cysteine 350, cysteine 177-cysteine 193, cysteine 180-cysteine 198, cysteine 190-cysteine 196, cysteine 246-cysteine 260, cysteine 358-cysteine 615, cysteine 364-cysteine 396, cysteine 374-cysteine 387, cysteine 421-cysteine 693, cysteine 437-cysteine 656, cysteine 469-cysteine 542, cysteine 493-cysteine 684, cysteine 503-cysteine 517, cysteine 514-cysteine 525, cysteine 582-cysteine 596, and cysteine 634-cysteine 639. Positions 139, 143, 145, and 146 each coordinate hydrogencarbonate. Tyrosine 207 is a binding site for Fe(3+). Position 268 (histidine 268) interacts with Fe(3+). Serine 389 is subject to Phosphoserine; by FAM20C. Aspartate 411 is a Fe(3+) binding site. A glycan (N-linked (GlcNAc...) (complex) asparagine) is linked at asparagine 432. Tyrosine 445 serves as a coordination point for Fe(3+). Hydrogencarbonate is bound by residues threonine 471, arginine 475, alanine 477, and glycine 478. N-linked (GlcNAc...) asparagine; atypical; partial glycosylation is present at asparagine 491. Residue tyrosine 536 participates in Fe(3+) binding. Histidine 604 is a Fe(3+) binding site. A glycan (N-linked (GlcNAc...) (complex) asparagine) is linked at asparagine 630. Serine 685 bears the Phosphoserine; by FAM20C mark.

This sequence belongs to the transferrin family. As to quaternary structure, monomer. Part of a complex composed of SLC40A1/ferroportin, TF/transferrin and HEPH/hephaestin that transfers iron from cells to transferrin. In terms of assembly, (Microbial infection) Binds to Neisseria transferrin-binding protein A (tbpA or tbp1). Forms a large complex with TbpA and TbpB. (Microbial infection) Binds to Neisseria transferrin-binding protein B (tbpb or tbp2). In terms of tissue distribution, expressed by the liver and secreted in plasma.

The protein resides in the secreted. Functionally, transferrins are iron binding transport proteins which can bind two Fe(3+) ions in association with the binding of an anion, usually bicarbonate. It is responsible for the transport of iron from sites of absorption and heme degradation to those of storage and utilization. Serum transferrin may also have a further role in stimulating cell proliferation. In terms of biological role, (Microbial infection) Serves as an iron source for Neisseria species, which capture the protein and extract its iron for their own use. (Microbial infection) Serves as an iron source for parasite T.brucei (strain 427), which capture TF via its own transferrin receptor ESAG6:ESAG7 and extract its iron for its own use. This is Serotransferrin from Homo sapiens (Human).